The following is a 569-amino-acid chain: Ribonuclease J (569 aa).

6 residues coordinate Zn(2+): His81, His83, Asp85, His86, His150, and Asp172. A substrate-binding site is contributed by His373–His377. Zn(2+) is bound at residue His399.

The protein belongs to the metallo-beta-lactamase superfamily. RNA-metabolizing metallo-beta-lactamase-like family. Bacterial RNase J subfamily. As to quaternary structure, homodimer, may be a subunit of the RNA degradosome. Zn(2+) serves as cofactor.

Its subcellular location is the cytoplasm. An RNase that has 5'-3' exonuclease and possibly endoonuclease activity. Involved in maturation of rRNA and in some organisms also mRNA maturation and/or decay. In Mycoplasma pneumoniae (strain ATCC 29342 / M129 / Subtype 1) (Mycoplasmoides pneumoniae), this protein is Ribonuclease J.